We begin with the raw amino-acid sequence, 214 residues long: Calcineurin B homologous protein 3 (214 aa).

The tract at residues 1 to 20 is disordered; the sequence is MGAAHSASEEVRELEGKTGF. The N-myristoyl glycine moiety is linked to residue glycine 2. Positions 7–16 are enriched in basic and acidic residues; it reads ASEEVRELEG. The EF-hand domain maps to 110–145; it reads SRKEKLRFLFHMYDSDSDGRITLEEYRNVVEELLSG. The Ca(2+) site is built by aspartate 123, aspartate 125, aspartate 127, arginine 129, and glutamate 134.

Belongs to the calcineurin regulatory subunit family. CHP subfamily. Monomer. Homodimer; disulfide-linked. Interacts with SLC9A1/NHE1; the interaction enables an optimal Na(+)/H(+) exchange activity. As to expression, expressed in mature megakaryocytes and polymorphonuclear granulocytes (at protein level). Abundantly expressed in heart. Also expressed at a lower level in adult testis and salivary gland, and in the placenta.

It localises to the nucleus. It is found in the cytoplasm. Its subcellular location is the membrane. The protein localises to the cell membrane. The protein resides in the cell projection. It localises to the lamellipodium. It is found in the ruffle membrane. Functions as an integral cofactor in cell pH regulation by controlling plasma membrane-type Na(+)/H(+) exchange activity. Promotes the maturation, transport, cell surface stability and exchange activity of SLC9A1/NHE1 at the plasma membrane. Promotes the induction of hematopoietic stem cell differentiation toward megakaryocytic lineage. Essential for the coupling of ERK cascade activation with the expression of ETS family genes in megakaryocytic differentiation. Also involved in granulocytic differentiation in a ERK-dependent manner. Inhibits the phosphatase activity of calcineurin. This chain is Calcineurin B homologous protein 3 (TESC), found in Homo sapiens (Human).